The chain runs to 616 residues: Dihydroxy-acid dehydratase (616 aa).

Aspartate 81 provides a ligand contact to Mg(2+). A [2Fe-2S] cluster-binding site is contributed by cysteine 122. Mg(2+)-binding residues include aspartate 123 and lysine 124. Lysine 124 carries the N6-carboxylysine modification. Position 195 (cysteine 195) interacts with [2Fe-2S] cluster. Glutamate 491 contributes to the Mg(2+) binding site. Serine 517 (proton acceptor) is an active-site residue.

Belongs to the IlvD/Edd family. In terms of assembly, homodimer. The cofactor is [2Fe-2S] cluster. Mg(2+) serves as cofactor.

The enzyme catalyses (2R)-2,3-dihydroxy-3-methylbutanoate = 3-methyl-2-oxobutanoate + H2O. It catalyses the reaction (2R,3R)-2,3-dihydroxy-3-methylpentanoate = (S)-3-methyl-2-oxopentanoate + H2O. Its pathway is amino-acid biosynthesis; L-isoleucine biosynthesis; L-isoleucine from 2-oxobutanoate: step 3/4. The protein operates within amino-acid biosynthesis; L-valine biosynthesis; L-valine from pyruvate: step 3/4. Its function is as follows. Functions in the biosynthesis of branched-chain amino acids. Catalyzes the dehydration of (2R,3R)-2,3-dihydroxy-3-methylpentanoate (2,3-dihydroxy-3-methylvalerate) into 2-oxo-3-methylpentanoate (2-oxo-3-methylvalerate) and of (2R)-2,3-dihydroxy-3-methylbutanoate (2,3-dihydroxyisovalerate) into 2-oxo-3-methylbutanoate (2-oxoisovalerate), the penultimate precursor to L-isoleucine and L-valine, respectively. The sequence is that of Dihydroxy-acid dehydratase from Yersinia enterocolitica serotype O:8 / biotype 1B (strain NCTC 13174 / 8081).